Here is a 60-residue protein sequence, read N- to C-terminus: MSEKKTVRVALVRSPIGTRESHRATVRGLGLRKVNSESVLEDTPAVRGMINKISYLVKVL.

It belongs to the universal ribosomal protein uL30 family. In terms of assembly, part of the 50S ribosomal subunit.

This chain is Large ribosomal subunit protein uL30, found in Leptothrix cholodnii (strain ATCC 51168 / LMG 8142 / SP-6) (Leptothrix discophora (strain SP-6)).